A 474-amino-acid polypeptide reads, in one-letter code: ERO1-like protein alpha (474 aa).

The first 29 residues, 1 to 29 (MVSGCCRLDMSSYVSVLVLCSLLLWGSNS), serve as a signal peptide directing secretion. Disulfide bonds link C40/C53, C42/C51, C90/C398, C99/C104, C99/C138, C104/C109, C215/C248, and C401/C404. FAD-binding residues include R194, T196, and W207. Positions 259, 262, 294, and 307 each coordinate FAD. Residues N340 and N391 are each glycosylated (N-linked (GlcNAc...) asparagine). A glycan (N-linked (GlcNAc...) asparagine) is linked at N430.

Belongs to the EROs family. Predominantly monomer. May function both as a monomer and a homodimer. FAD serves as cofactor. The Cys-99/Cys-104 and Cys-401/Cys-404 disulfide bonds constitute the redox-active center. The Cys-99/Cys-104 disulfide bond may accept electron from protein disulfide isomerase (PDI) and funnel them to the active site disulfide Cys-401/Cys-404.

It localises to the endoplasmic reticulum membrane. Its activity is regulated as follows. Enzyme activity is tightly regulated to prevent the accumulation of reactive oxygen species in the endoplasmic reticulum. Reversibly down-regulated by the formation of disulfide bonds between the active site Cys-99 and Cys-138, and between Cys-104 and Cys-109. Glutathione may be required to regulate its activity in the endoplasmic reticulum. Functionally, oxidoreductase involved in disulfide bond formation in the endoplasmic reticulum. Efficiently reoxidizes P4HB/PDI, the enzyme catalyzing protein disulfide formation, in order to allow P4HB to sustain additional rounds of disulfide formation. Following P4HB reoxidation, passes its electrons to molecular oxygen via FAD, leading to the production of reactive oxygen species (ROS) in the cell. Required for the folding of immunoglobulins. This Xenopus tropicalis (Western clawed frog) protein is ERO1-like protein alpha.